The following is a 314-amino-acid chain: Dihydropteroate synthase (314 aa).

The 285-residue stretch at threonine 10–glutamate 294 folds into the Pterin-binding domain. Asparagine 17 contributes to the Mg(2+) binding site. Residues threonine 57, aspartate 91, asparagine 110, aspartate 201, lysine 237, and arginine 282–histidine 284 each bind (7,8-dihydropterin-6-yl)methyl diphosphate.

It belongs to the DHPS family. As to quaternary structure, homodimer or homotrimer. Requires Mg(2+) as cofactor.

The enzyme catalyses (7,8-dihydropterin-6-yl)methyl diphosphate + 4-aminobenzoate = 7,8-dihydropteroate + diphosphate. The protein operates within cofactor biosynthesis; tetrahydrofolate biosynthesis; 7,8-dihydrofolate from 2-amino-4-hydroxy-6-hydroxymethyl-7,8-dihydropteridine diphosphate and 4-aminobenzoate: step 1/2. Functionally, catalyzes the condensation of para-aminobenzoate (pABA) with 6-hydroxymethyl-7,8-dihydropterin diphosphate (DHPt-PP) to form 7,8-dihydropteroate (H2Pte), the immediate precursor of folate derivatives. The polypeptide is Dihydropteroate synthase (sulA) (Streptococcus pneumoniae serotype 4 (strain ATCC BAA-334 / TIGR4)).